The following is a 122-amino-acid chain: Large ribosomal subunit protein uL14 (122 aa).

The protein belongs to the universal ribosomal protein uL14 family. In terms of assembly, part of the 50S ribosomal subunit. Forms a cluster with proteins L3 and L19. In the 70S ribosome, L14 and L19 interact and together make contacts with the 16S rRNA in bridges B5 and B8.

Binds to 23S rRNA. Forms part of two intersubunit bridges in the 70S ribosome. The polypeptide is Large ribosomal subunit protein uL14 (Burkholderia lata (strain ATCC 17760 / DSM 23089 / LMG 22485 / NCIMB 9086 / R18194 / 383)).